Consider the following 185-residue polypeptide: Casparian strip membrane protein 1 (185 aa).

The Cytoplasmic segment spans residues M1–R32. The helical transmembrane segment at I33–L53 threads the bilayer. The Extracellular portion of the chain corresponds to S54–K73. A helical transmembrane segment spans residues F74 to I94. Over F95 to R106 the chain is Cytoplasmic. Residues V107–A127 form a helical membrane-spanning segment. Residues A128–S160 lie on the Extracellular side of the membrane. N-linked (GlcNAc...) asparagine glycosylation occurs at N138. The chain crosses the membrane as a helical span at residues L161–A181. Over L182 to R185 the chain is Cytoplasmic.

The protein belongs to the Casparian strip membrane proteins (CASP) family. As to quaternary structure, homodimer and heterodimers.

The protein localises to the cell membrane. Regulates membrane-cell wall junctions and localized cell wall deposition. Required for establishment of the Casparian strip membrane domain (CSD) and the subsequent formation of Casparian strips, a cell wall modification of the root endodermis that determines an apoplastic barrier between the intraorganismal apoplasm and the extraorganismal apoplasm and prevents lateral diffusion. This Solanum demissum (Wild potato) protein is Casparian strip membrane protein 1.